Consider the following 167-residue polypeptide: 6,7-dimethyl-8-ribityllumazine synthase (167 aa).

5-amino-6-(D-ribitylamino)uracil-binding positions include Phe24, 58-60, and 82-84; these read ALE and AVV. A (2S)-2-hydroxy-3-oxobutyl phosphate-binding site is contributed by 87–88; that stretch reads ET. His90 acts as the Proton donor in catalysis. A 5-amino-6-(D-ribitylamino)uracil-binding site is contributed by Asn115. Residue Arg129 coordinates (2S)-2-hydroxy-3-oxobutyl phosphate.

This sequence belongs to the DMRL synthase family.

It carries out the reaction (2S)-2-hydroxy-3-oxobutyl phosphate + 5-amino-6-(D-ribitylamino)uracil = 6,7-dimethyl-8-(1-D-ribityl)lumazine + phosphate + 2 H2O + H(+). The protein operates within cofactor biosynthesis; riboflavin biosynthesis; riboflavin from 2-hydroxy-3-oxobutyl phosphate and 5-amino-6-(D-ribitylamino)uracil: step 1/2. Catalyzes the formation of 6,7-dimethyl-8-ribityllumazine by condensation of 5-amino-6-(D-ribitylamino)uracil with 3,4-dihydroxy-2-butanone 4-phosphate. This is the penultimate step in the biosynthesis of riboflavin. This chain is 6,7-dimethyl-8-ribityllumazine synthase, found in Cupriavidus pinatubonensis (strain JMP 134 / LMG 1197) (Cupriavidus necator (strain JMP 134)).